We begin with the raw amino-acid sequence, 299 residues long: Oxygen-dependent coproporphyrinogen-III oxidase (299 aa).

Ser92 contributes to the substrate binding site. Mn(2+) contacts are provided by His96 and His106. His106 serves as the catalytic Proton donor. Residue 108–110 (NVR) coordinates substrate. Residues His145 and His175 each contribute to the Mn(2+) site. Residues 240 to 275 (YVEFNLVWDRGTLFGLQTGGRTESILMSMPPLVRWE) are important for dimerization. Substrate is bound at residue 258-260 (GGR).

This sequence belongs to the aerobic coproporphyrinogen-III oxidase family. As to quaternary structure, homodimer. It depends on Mn(2+) as a cofactor.

It localises to the cytoplasm. It catalyses the reaction coproporphyrinogen III + O2 + 2 H(+) = protoporphyrinogen IX + 2 CO2 + 2 H2O. It participates in porphyrin-containing compound metabolism; protoporphyrin-IX biosynthesis; protoporphyrinogen-IX from coproporphyrinogen-III (O2 route): step 1/1. Its function is as follows. Involved in the heme biosynthesis. Catalyzes the aerobic oxidative decarboxylation of propionate groups of rings A and B of coproporphyrinogen-III to yield the vinyl groups in protoporphyrinogen-IX. This is Oxygen-dependent coproporphyrinogen-III oxidase from Escherichia coli O8 (strain IAI1).